A 737-amino-acid chain; its full sequence is Polyribonucleotide nucleotidyltransferase (737 aa).

2 residues coordinate Mg(2+): Asp489 and Asp495. The KH domain occupies 556-615; that stretch reads PKIDTIKIDVDKIKIVIGKGGETIDKIIAETGVKIDIDEEGNVSIYSSDQDAINRAKEII. In terms of domain architecture, S1 motif spans 625-693; the sequence is DEVYRAKVVR…EKGRIDASMK (69 aa). Positions 691 to 737 are disordered; the sequence is SMKALLPRPPKPEHDEKGEKSERPHRPRHHKDHKPKKEFTETPKDSE. Residues 700–714 show a composition bias toward basic and acidic residues; sequence PKPEHDEKGEKSERP. The segment covering 715 to 724 has biased composition (basic residues); the sequence is HRPRHHKDHK. Positions 725–737 are enriched in basic and acidic residues; that stretch reads PKKEFTETPKDSE.

This sequence belongs to the polyribonucleotide nucleotidyltransferase family. Mg(2+) serves as cofactor.

Its subcellular location is the cytoplasm. The enzyme catalyses RNA(n+1) + phosphate = RNA(n) + a ribonucleoside 5'-diphosphate. Functionally, involved in mRNA degradation. Catalyzes the phosphorolysis of single-stranded polyribonucleotides processively in the 3'- to 5'-direction. The chain is Polyribonucleotide nucleotidyltransferase from Streptococcus pneumoniae (strain Taiwan19F-14).